Consider the following 75-residue polypeptide: DNA-directed RNA polymerase subunit omega (75 aa).

Belongs to the RNA polymerase subunit omega family. In terms of assembly, in cyanobacteria the RNAP catalytic core is composed of 2 alpha, 1 beta, 1 beta', 1 gamma and 1 omega subunit. When a sigma factor is associated with the core the holoenzyme is formed, which can initiate transcription.

It carries out the reaction RNA(n) + a ribonucleoside 5'-triphosphate = RNA(n+1) + diphosphate. Promotes RNA polymerase assembly. Latches the N- and C-terminal regions of the beta' subunit thereby facilitating its interaction with the beta and alpha subunits. This is DNA-directed RNA polymerase subunit omega from Prochlorococcus marinus (strain MIT 9211).